An 842-amino-acid polypeptide reads, in one-letter code: CRM-domain containing factor CFM3, chloroplastic/mitochondrial (842 aa).

A chloroplast and mitochondrion-targeting transit peptide spans 1–82 (MAMASSPACH…RSSGRSTMSL (82 aa)). Disordered regions lie at residues 49–80 (AALD…RSTM), 141–160 (RFPW…SARS), and 254–290 (VDYD…LPTE). In terms of domain architecture, CRM 1 spans 167-263 (LTLPAAELRR…VDYDEPEPTK (97 aa)). A compositionally biased stretch (polar residues) spans 280 to 290 (GSSNPSLLPTE). 2 consecutive CRM domains span residues 371-468 (PSLS…ELAE) and 582-682 (ETIT…SSLR). Residues 703–732 (QALSRHFAKLNRKVERLKAELVQMEDVKEQ) adopt a coiled-coil conformation. Residues 768 to 842 (VAGATADDDG…DRRNHDVNEY (75 aa)) are disordered. The span at 786–812 (DEADYPDSDDEAGDCSEDEGEDDEDEA) shows a compositional bias: acidic residues. Over residues 831–842 (DTDRRNHDVNEY) the composition is skewed to basic and acidic residues.

Interacts with RNA. Part of large ribonucleo-protein particles that contain CAF1 and/or CAF2, and RNC1.

The protein resides in the plastid. It localises to the chloroplast stroma. Its subcellular location is the mitochondrion. Binds specific group II introns in chloroplasts and facilitates their splicing. Acts on subgroup IIB introns. The substrates of the subgroup IIB also require the CRM domain proteins CAF1 or CAF2, with a simultaneous binding of CFM3 and CAF1 or CAF2. May influence the biogenesis of the mitochondrial small ribosomal subunit. The polypeptide is CRM-domain containing factor CFM3, chloroplastic/mitochondrial (Zea mays (Maize)).